The following is a 551-amino-acid chain: Peptidyl-prolyl cis-trans isomerase-like 4 (551 aa).

A PPIase cyclophilin-type domain is found at 1–185 (MSVLLETSLG…RDIRIRHVVV (185 aa)). The segment at 54 to 88 (GDPSNTGKGGASIWSQLPSTSQDSSTSTYFTPESS) is disordered. Over residues 66-88 (IWSQLPSTSQDSSTSTYFTPESS) the composition is skewed to polar residues. The RRM domain maps to 262 to 340 (NILFVCKLNP…RRIWVDFSQS (79 aa)). Positions 352–551 (RNAGSDAPRA…RQRSRDGSRR (200 aa)) are disordered. 2 stretches are compositionally biased toward basic and acidic residues: residues 384–397 (KRGD…RDQP) and 408–454 (SRQD…SHRD). The span at 455 to 464 (HERHHLSRHV) shows a compositional bias: basic residues. Residues 465–551 (RPSDEGESKC…RQRSRDGSRR (87 aa)) are compositionally biased toward basic and acidic residues.

This sequence belongs to the cyclophilin-type PPIase family. PPIL4 subfamily.

It is found in the nucleus. The catalysed reaction is [protein]-peptidylproline (omega=180) = [protein]-peptidylproline (omega=0). Its function is as follows. PPIases accelerate the folding of proteins. It catalyzes the cis-trans isomerization of proline imidic peptide bonds in oligopeptides. The sequence is that of Peptidyl-prolyl cis-trans isomerase-like 4 (CYP6) from Mycosarcoma maydis (Corn smut fungus).